Reading from the N-terminus, the 251-residue chain is MRKSARGQVCTEAGAGASGDWQDMSSAWGKRAWQDLNSAWGKRGWNDMSSAWGKRAWQDLNSAWGKRGWQDLNSAWGKRAWRDMSQSPWGKRGWNDMSSAWGKRGWNDMSSAWGKRGWNDMSSAWGKRGWNDMSSAWGKRGPEKWANFHGSWGKRAAEPDYEEIDAAIEQLIPIQQLSDNERMEVPEKKAWSALHGAWGKRPVKQAQYNSGSYYWKREPAWTNLRGMWGKRSAPDADAVDDDHESSARDEA.

The disordered stretch occupies residues 1–22 (MRKSARGQVCTEAGAGASGDWQ). The propeptide occupies 1–77 (MRKSARGQVC…GWQDLNSAWG (77 aa)). Tryptophan 89 carries the post-translational modification Tryptophan amide. A propeptide spanning residues 93 to 138 (GWNDMSSAWGKRGWNDMSSAWGKRGWNDMSSAWGKRGWNDMSSAWG) is cleaved from the precursor. Tryptophan 152 carries the post-translational modification Tryptophan amide. A propeptide spanning residues 156 to 187 (AAEPDYEEIDAAIEQLIPIQQLSDNERMEVPE) is cleaved from the precursor. Residues tryptophan 198 and tryptophan 228 each carry the tryptophan amide modification. A disordered region spans residues 227–251 (MWGKRSAPDADAVDDDHESSARDEA).

In terms of tissue distribution, prothoracicostatic peptide 5: Expressed in antennal lobe (AL), corpora cardiaca (CC), corpora allata (CA) and gnathal ganglion (GNG) (at protein level). Expression in AL detected in all animals, in CC, CA and GNG in most (at protein level). Prothoracicostatic peptide 6: Expressed in antennal lobe (AL), corpora cardiaca (CC), corpora allata (CA) and gnathal ganglion (GNG) (at protein level). Expression in AL detected in all animals, expression in GNG in most animals, in CA and CC detected in some animals (at protein level). Prothoracicostatic peptide 7: Expressed in antennal lobe (AL), corpora cardiaca (CC), corpora allata (CA) and gnathal ganglion (GNG) (at protein level). Expression in AL, CA and CC detected in most animals, expression in GNG in some animals (at protein level). Prothoracicostatic peptide precursor-related peptide 2: Expressed in antennal lobe (AL), corpora cardiaca (CC) and corpora allata (CA) with expression detected in few animals (at protein level). Not expressed in gnathal ganglion (GNG) (at protein level). Prothoracicostatic peptide 8: Expressed in antennal lobe (AL), corpora cardiaca (CC), corpora allata (CA) and gnathal ganglion (GNG) (at protein level). Expression in AL detected in all animals, expression in GNG in most animals, in CA and CC detected in some animals (at protein level). Prothoracicostatic peptide precursor-related peptide 3: Expressed in antennal lobe (AL) in few animals (at protein level). Not expressed in corpora cardiaca (CC), corpora allata (CA) and gnathal ganglion (GNG) (at protein level).

It localises to the secreted. The protein is Prothoracicostatic peptides of Agrotis ipsilon (Black cutworm moth).